We begin with the raw amino-acid sequence, 329 residues long: Prostaglandin reductase 1 (329 aa).

Thr-18 is subject to Phosphothreonine. Residue Ser-20 is modified to Phosphoserine. Residues 152-155, Lys-178, Tyr-193, Asn-217, 239-245, 270-272, and Asn-321 contribute to the NADP(+) site; these read GAVG, CGAISQY, and FIV. N6-(2-hydroxyisobutyryl)lysine; alternate is present on Lys-178. N6-acetyllysine; alternate is present on Lys-178.

Belongs to the NADP-dependent oxidoreductase L4BD family. As to quaternary structure, monomer or homodimer.

The protein resides in the cytoplasm. The enzyme catalyses 13,14-dihydro-15-oxo-prostaglandin E1 + NADP(+) = 15-oxoprostaglandin E1 + NADPH + H(+). It carries out the reaction 13,14-dihydro-15-oxo-prostaglandin E2 + NADP(+) = 15-oxoprostaglandin E2 + NADPH + H(+). It catalyses the reaction 13,14-dihydro-15-oxo-prostaglandin F1alpha + NADP(+) = 15-oxoprostaglandin F1alpha + NADPH + H(+). The catalysed reaction is 13,14-dihydro-15-oxo-PGF2alpha + NADP(+) = 15-oxoprostaglandin F2alpha + NADPH + H(+). The enzyme catalyses leukotriene B4 + NADP(+) = 12-oxo-leukotriene B4 + NADPH + H(+). It carries out the reaction 20-hydroxy-leukotriene B4 + NADP(+) = 12-oxo-20-hydroxy-leukotriene B4 + NADPH + H(+). It catalyses the reaction 6-trans-leukotriene B4 + NADP(+) = 12-oxo-(5S)-hydroxy-(6E,8E,10E,14Z)-eicosatetraenoate + NADPH + H(+). The catalysed reaction is (5S,12S)-dihydroxy-(6E,10E,12E,14Z)-eicosatetraenoate + NADP(+) = 12-oxo-(5S)-hydroxy-(6E,8E,10E,14Z)-eicosatetraenoate + NADPH + H(+). The enzyme catalyses an n-alkanal + NADP(+) = an alk-2-enal + NADPH + H(+). It carries out the reaction hexanal + NADP(+) = (E)-hex-2-enal + NADPH + H(+). It catalyses the reaction octanal + NADP(+) = (2E)-octenal + NADPH + H(+). The catalysed reaction is decanal + NADP(+) = (2E)-decenal + NADPH + H(+). The enzyme catalyses dodecanal + NADP(+) = (2E)-dodecenal + NADPH + H(+). It carries out the reaction 4-hydroxynonanal + NADP(+) = (E)-4-hydroxynon-2-enal + NADPH + H(+). It catalyses the reaction pentan-2-one + NADP(+) = (E)-pent-3-en-2-one + NADPH + H(+). The catalysed reaction is nonan-2-one + NADP(+) = (3E)-nonen-2-one + NADPH + H(+). In terms of biological role, NAD(P)H-dependent oxidoreductase involved in metabolic inactivation of pro- and anti-inflammatory eicosanoids: prostaglandins (PG), leukotrienes (LT) and lipoxins (LX). Catalyzes with high efficiency the reduction of the 13,14 double bond of 15-oxoPGs, including 15-oxo-PGE1, 15-oxo-PGE2, 15-oxo-PGF1-alpha and 15-oxo-PGF2-alpha. Catalyzes with lower efficiency the oxidation of the hydroxyl group at C12 of LTB4 and its derivatives, converting them into biologically less active 12-oxo-LTB4 metabolites. Reduces 15-oxo-LXA4 to 13,14 dihydro-15-oxo-LXA4, enhancing neutrophil recruitment at the inflammatory site. Plays a role in metabolic detoxification of alkenals and ketones. Reduces alpha,beta-unsaturated alkenals and ketones, particularly those with medium-chain length, showing highest affinity toward (2E)-decenal and (3E)-3-nonen-2-one. Inactivates 4-hydroxy-2-nonenal, a cytotoxic lipid constituent of oxidized low-density lipoprotein particles. The sequence is that of Prostaglandin reductase 1 (Ptgr1) from Rattus norvegicus (Rat).